A 717-amino-acid polypeptide reads, in one-letter code: Fatty acid oxidation complex subunit alpha (717 aa).

Residues 1 to 190 form an enoyl-CoA hydratase/isomerase region; the sequence is MIHAGNAITV…KDGAVDAVVA (190 aa). D298 contributes to the substrate binding site. The segment at 313 to 717 is 3-hydroxyacyl-CoA dehydrogenase; the sequence is HPVNQAAVLG…MAANNKKFYG (405 aa). NAD(+) is bound by residues M326, D345, 402-404, K409, and S431; that span reads VTE. The For 3-hydroxyacyl-CoA dehydrogenase activity role is filled by H452. NAD(+) is bound at residue N455. Residue N502 coordinates substrate.

It in the N-terminal section; belongs to the enoyl-CoA hydratase/isomerase family. The protein in the C-terminal section; belongs to the 3-hydroxyacyl-CoA dehydrogenase family. As to quaternary structure, heterotetramer of two alpha chains (FadB) and two beta chains (FadA).

It catalyses the reaction a (3S)-3-hydroxyacyl-CoA + NAD(+) = a 3-oxoacyl-CoA + NADH + H(+). The catalysed reaction is a (3S)-3-hydroxyacyl-CoA = a (2E)-enoyl-CoA + H2O. The enzyme catalyses a 4-saturated-(3S)-3-hydroxyacyl-CoA = a (3E)-enoyl-CoA + H2O. It carries out the reaction (3S)-3-hydroxybutanoyl-CoA = (3R)-3-hydroxybutanoyl-CoA. It catalyses the reaction a (3Z)-enoyl-CoA = a 4-saturated (2E)-enoyl-CoA. The catalysed reaction is a (3E)-enoyl-CoA = a 4-saturated (2E)-enoyl-CoA. The protein operates within lipid metabolism; fatty acid beta-oxidation. In terms of biological role, involved in the aerobic and anaerobic degradation of long-chain fatty acids via beta-oxidation cycle. Catalyzes the formation of 3-oxoacyl-CoA from enoyl-CoA via L-3-hydroxyacyl-CoA. It can also use D-3-hydroxyacyl-CoA and cis-3-enoyl-CoA as substrate. The sequence is that of Fatty acid oxidation complex subunit alpha from Acinetobacter baumannii (strain ACICU).